Reading from the N-terminus, the 116-residue chain is Ribonuclease P protein component 2 (116 aa).

It belongs to the eukaryotic/archaeal RNase P protein component 2 family. Consists of a catalytic RNA component and at least 4-5 protein subunits.

Its subcellular location is the cytoplasm. The enzyme catalyses Endonucleolytic cleavage of RNA, removing 5'-extranucleotides from tRNA precursor.. In terms of biological role, part of ribonuclease P, a protein complex that generates mature tRNA molecules by cleaving their 5'-ends. This Methanosarcina mazei (strain ATCC BAA-159 / DSM 3647 / Goe1 / Go1 / JCM 11833 / OCM 88) (Methanosarcina frisia) protein is Ribonuclease P protein component 2.